Consider the following 386-residue polypeptide: Probable serine/threonine-protein kinase PBL23 (386 aa).

A lipid anchor (S-palmitoyl cysteine) is attached at cysteine 5. A Protein kinase domain is found at 82–360 (FNPDNQLGEG…SDVVTALEYL (279 aa)). ATP-binding positions include 88-96 (LGEGGFGRV) and lysine 111. Aspartate 210 functions as the Proton acceptor in the catalytic mechanism. Residues 365-386 (TEEDGQTVEGEEEEEEDERSKL) form a disordered region. Positions 368-386 (DGQTVEGEEEEEEDERSKL) are enriched in acidic residues.

This sequence belongs to the protein kinase superfamily. Ser/Thr protein kinase family.

Its subcellular location is the cell membrane. It catalyses the reaction L-seryl-[protein] + ATP = O-phospho-L-seryl-[protein] + ADP + H(+). The catalysed reaction is L-threonyl-[protein] + ATP = O-phospho-L-threonyl-[protein] + ADP + H(+). Functionally, may be involved in plant defense signaling. The polypeptide is Probable serine/threonine-protein kinase PBL23 (Arabidopsis thaliana (Mouse-ear cress)).